The chain runs to 1149 residues: FH2 domain-containing protein 1 (1149 aa).

4 disordered regions span residues 18–79, 464–540, 554–660, and 681–1149; these read LATA…PPPG, NHDR…SRLS, ESAT…PLLP, and SPKS…PLQK. Pro residues-rich tracts occupy residues 33-48 and 56-79; these read ASPP…PPCP and PSPP…PPPG. Positions 88–483 constitute an FH2 domain; it reads GYSSLGKKKR…QLQRQKEMEQ (396 aa). Residues 464–485 are compositionally biased toward basic and acidic residues; sequence NHDREEQERKQLQRQKEMEQKR. Positions 486-504 are enriched in polar residues; it reads YSWSTGELGSFGRSSSEND. At Ser501 the chain carries Phosphoserine. Over residues 522 to 532 the composition is skewed to low complexity; it reads PRPNSPSYRPP. 2 stretches are compositionally biased toward polar residues: residues 554–575 and 591–604; these read ESAT…SSPR and SHGP…QASK. Ser645 and Ser655 each carry phosphoserine. The span at 681 to 693 shows a compositional bias: polar residues; the sequence is SPKSLEEGSQLTL. Positions 784 to 795 are enriched in basic and acidic residues; it reads MDSRAGGDKQEE. Residues 801-822 show a composition bias toward low complexity; sequence GSVSSGAGEAGSSQVSSNSVSS. Over residues 844–856 the composition is skewed to basic and acidic residues; the sequence is PKDRPSRGKDAIA. A compositionally biased stretch (polar residues) spans 926-947; it reads ETPSSTDTPLSRRSSVRGTSDT. Residues 960–1086 are MTBD; microtubule-binding domain; it reads EEPRLPRSSG…VKGGSEDSAS (127 aa). The segment covering 965–974 has biased composition (low complexity); that stretch reads PRSSGSISGR. Polar residues-rich tracts occupy residues 1042–1052 and 1064–1074; these read ARNTVASSSRS and TGLTRTVSQRQ. Residues 1123–1134 show a composition bias toward basic and acidic residues; it reads GTTERSSLRLKD.

In terms of assembly, interacts with CEP170. As to expression, brain, heart and lung (at protein level).

It localises to the golgi apparatus. The protein localises to the cell projection. Its subcellular location is the cilium. Microtubule-associated formin which regulates both actin and microtubule dynamics. Induces microtubule acetylation and stabilization and actin stress fiber formation. Regulates Golgi ribbon formation. Required for normal cilia assembly. Early in cilia assembly, may assist in the maturation and positioning of the centrosome/basal body, and once cilia assembly has initiated, may also promote cilia elongation by inhibiting disassembly. This chain is FH2 domain-containing protein 1 (Fhdc1), found in Mus musculus (Mouse).